Consider the following 322-residue polypeptide: Mycothiol acetyltransferase (322 aa).

N-acetyltransferase domains are found at residues 5 to 150 (SWLR…DPDD) and 160 to 322 (VTIR…PARG). Glutamate 36 is a binding site for 1D-myo-inositol 2-(L-cysteinylamino)-2-deoxy-alpha-D-glucopyranoside. Residues 79-81 (LVV) and 87-92 (RRGVGT) contribute to the acetyl-CoA site. 1D-myo-inositol 2-(L-cysteinylamino)-2-deoxy-alpha-D-glucopyranoside is bound by residues glutamate 187, lysine 226, and glutamate 252. 256-258 (VGV) serves as a coordination point for acetyl-CoA. Tyrosine 290 lines the 1D-myo-inositol 2-(L-cysteinylamino)-2-deoxy-alpha-D-glucopyranoside pocket. 295–300 (NARAVR) is a binding site for acetyl-CoA.

The protein belongs to the acetyltransferase family. MshD subfamily. As to quaternary structure, monomer.

It carries out the reaction 1D-myo-inositol 2-(L-cysteinylamino)-2-deoxy-alpha-D-glucopyranoside + acetyl-CoA = mycothiol + CoA + H(+). Its function is as follows. Catalyzes the transfer of acetyl from acetyl-CoA to desacetylmycothiol (Cys-GlcN-Ins) to form mycothiol. In Parafrankia sp. (strain EAN1pec), this protein is Mycothiol acetyltransferase.